Here is a 451-residue protein sequence, read N- to C-terminus: Tubulin alpha chain (451 aa).

Q11 is a binding site for GTP. At K40 the chain carries N6-acetyllysine. GTP contacts are provided by E71, G144, T145, T179, N206, and N228. Position 71 (E71) interacts with Mg(2+). Residue E254 is part of the active site.

The protein belongs to the tubulin family. As to quaternary structure, dimer of alpha and beta chains. A typical microtubule is a hollow water-filled tube with an outer diameter of 25 nm and an inner diameter of 15 nM. Alpha-beta heterodimers associate head-to-tail to form protofilaments running lengthwise along the microtubule wall with the beta-tubulin subunit facing the microtubule plus end conferring a structural polarity. Microtubules usually have 13 protofilaments but different protofilament numbers can be found in some organisms and specialized cells. Requires Mg(2+) as cofactor. Undergoes a tyrosination/detyrosination cycle, the cyclic removal and re-addition of a C-terminal tyrosine residue by the enzymes tubulin tyrosine carboxypeptidase (TTCP) and tubulin tyrosine ligase (TTL), respectively. In terms of processing, acetylation of alpha chains at Lys-40 stabilizes microtubules and affects affinity and processivity of microtubule motors. This modification has a role in multiple cellular functions, ranging from cell motility, cell cycle progression or cell differentiation to intracellular trafficking and signaling.

It localises to the cytoplasm. Its subcellular location is the cytoskeleton. The enzyme catalyses GTP + H2O = GDP + phosphate + H(+). Its function is as follows. Tubulin is the major constituent of microtubules, a cylinder consisting of laterally associated linear protofilaments composed of alpha- and beta-tubulin heterodimers. Microtubules grow by the addition of GTP-tubulin dimers to the microtubule end, where a stabilizing cap forms. Below the cap, tubulin dimers are in GDP-bound state, owing to GTPase activity of alpha-tubulin. This is Tubulin alpha chain (TUBA) from Chlorella vulgaris (Green alga).